A 267-amino-acid chain; its full sequence is 3-methyl-2-oxobutanoate hydroxymethyltransferase (267 aa).

Mg(2+)-binding residues include aspartate 46 and aspartate 85. Residues 46-47 (DS), aspartate 85, and lysine 115 contribute to the 3-methyl-2-oxobutanoate site. Residue glutamate 117 participates in Mg(2+) binding. The Proton acceptor role is filled by glutamate 184.

The protein belongs to the PanB family. In terms of assembly, homodecamer; pentamer of dimers. Requires Mg(2+) as cofactor.

It localises to the cytoplasm. It catalyses the reaction 3-methyl-2-oxobutanoate + (6R)-5,10-methylene-5,6,7,8-tetrahydrofolate + H2O = 2-dehydropantoate + (6S)-5,6,7,8-tetrahydrofolate. Its pathway is cofactor biosynthesis; (R)-pantothenate biosynthesis; (R)-pantoate from 3-methyl-2-oxobutanoate: step 1/2. Its function is as follows. Catalyzes the reversible reaction in which hydroxymethyl group from 5,10-methylenetetrahydrofolate is transferred onto alpha-ketoisovalerate to form ketopantoate. The sequence is that of 3-methyl-2-oxobutanoate hydroxymethyltransferase from Citrifermentans bemidjiense (strain ATCC BAA-1014 / DSM 16622 / JCM 12645 / Bem) (Geobacter bemidjiensis).